Reading from the N-terminus, the 729-residue chain is Catalase-peroxidase (729 aa).

The segment at 1 to 24 (MDAKTNDGKAGQCPFTSGRGHKNR) is disordered. A cross-link (tryptophyl-tyrosyl-methioninium (Trp-Tyr) (with M-243)) is located at residues 95–217 (WHSAGTYRIT…LAAVQMGLIY (123 aa)). Catalysis depends on histidine 96, which acts as the Proton acceptor. Residues 217–243 (YVNPEGPNGQPDPLAAAKDIRETFLRM) constitute a cross-link (tryptophyl-tyrosyl-methioninium (Tyr-Met) (with W-95)). Heme b is bound at residue histidine 258.

This sequence belongs to the peroxidase family. Peroxidase/catalase subfamily. As to quaternary structure, homodimer or homotetramer. The cofactor is heme b. Formation of the three residue Trp-Tyr-Met cross-link is important for the catalase, but not the peroxidase activity of the enzyme.

The enzyme catalyses H2O2 + AH2 = A + 2 H2O. It carries out the reaction 2 H2O2 = O2 + 2 H2O. Its function is as follows. Bifunctional enzyme with both catalase and broad-spectrum peroxidase activity. In Nitrobacter winogradskyi (strain ATCC 25391 / DSM 10237 / CIP 104748 / NCIMB 11846 / Nb-255), this protein is Catalase-peroxidase.